Reading from the N-terminus, the 526-residue chain is Bifunctional purine biosynthesis protein PurH (526 aa).

Residues 1–145 (MIRTALLSVS…KNHQDVTVLI (145 aa)) enclose the MGS-like domain.

It belongs to the PurH family.

It carries out the reaction (6R)-10-formyltetrahydrofolate + 5-amino-1-(5-phospho-beta-D-ribosyl)imidazole-4-carboxamide = 5-formamido-1-(5-phospho-D-ribosyl)imidazole-4-carboxamide + (6S)-5,6,7,8-tetrahydrofolate. It catalyses the reaction IMP + H2O = 5-formamido-1-(5-phospho-D-ribosyl)imidazole-4-carboxamide. Its pathway is purine metabolism; IMP biosynthesis via de novo pathway; 5-formamido-1-(5-phospho-D-ribosyl)imidazole-4-carboxamide from 5-amino-1-(5-phospho-D-ribosyl)imidazole-4-carboxamide (10-formyl THF route): step 1/1. The protein operates within purine metabolism; IMP biosynthesis via de novo pathway; IMP from 5-formamido-1-(5-phospho-D-ribosyl)imidazole-4-carboxamide: step 1/1. The protein is Bifunctional purine biosynthesis protein PurH of Polynucleobacter necessarius subsp. necessarius (strain STIR1).